Consider the following 339-residue polypeptide: HPr kinase/phosphorylase (339 aa).

Active-site residues include histidine 153 and lysine 174. Residue 168–175 participates in ATP binding; it reads GKSGLGKS. A Mg(2+)-binding site is contributed by serine 175. The active-site Proton acceptor; for phosphorylation activity. Proton donor; for dephosphorylation activity is aspartate 192. The important for the catalytic mechanism of both phosphorylation and dephosphorylation stretch occupies residues 216–225; that stretch reads MEIRGLGVVD. Glutamate 217 lines the Mg(2+) pocket. Arginine 258 is an active-site residue. The interval 279-284 is important for the catalytic mechanism of dephosphorylation; that stretch reads PINPGK.

It belongs to the HPrK/P family. In terms of assembly, homohexamer. It depends on Mg(2+) as a cofactor.

It catalyses the reaction [HPr protein]-L-serine + ATP = [HPr protein]-O-phospho-L-serine + ADP + H(+). It carries out the reaction [HPr protein]-O-phospho-L-serine + phosphate + H(+) = [HPr protein]-L-serine + diphosphate. Its function is as follows. Catalyzes the ATP- as well as the pyrophosphate-dependent phosphorylation of a specific serine residue in HPr, a phosphocarrier protein of the phosphoenolpyruvate-dependent sugar phosphotransferase system (PTS). HprK/P also catalyzes the pyrophosphate-producing, inorganic phosphate-dependent dephosphorylation (phosphorolysis) of seryl-phosphorylated HPr (P-Ser-HPr). This chain is HPr kinase/phosphorylase, found in Chlorobium phaeobacteroides (strain BS1).